The primary structure comprises 325 residues: MEEMRHAGQISRKLLFYFGSDNYNLSINDSMFRNCTLRADRAAALFGTMLEGVFLGIVLTMMGFFSVKTRFTPSSNIWLFAGCVAIALWLMTKMAQDYAPGPLKCIVTENLALFCSLLGGALNVGMCVDRCRAVYSRMARGSMTPAAICTYIFWAVVGSLLVIAVNALEMSRNGLHMSEGLEGGCFQAASPLAHRAKLVAKFLMYLVFVCIVSVGTALTLVKILNTNLNRKRAICVNVVLVTLPNTFIWLTAMTSAWREFSSYKMCPKIVTGNVFIYLSSVPMLVILFVYMFTGKNLKHTLRPQTRSYSSSTGSASCFAHLAGKP.

7 helical membrane passes run 45–65 (LFGT…MGFF), 71–91 (FTPS…LWLM), 106–126 (IVTE…NVGM), 145–165 (PAAI…VIAV), 198–218 (LVAK…GTAL), 233–253 (AICV…LTAM), and 274–294 (VFIY…MFTG).

This sequence belongs to the G-protein coupled receptor 1 family.

The protein localises to the host membrane. The chain is G-protein coupled receptor E6 (E6) from Equus caballus (Horse).